We begin with the raw amino-acid sequence, 504 residues long: ATP synthase subunit alpha (504 aa).

An ATP-binding site is contributed by Gly-169–Thr-176.

This sequence belongs to the ATPase alpha/beta chains family. In terms of assembly, F-type ATPases have 2 components, CF(1) - the catalytic core - and CF(0) - the membrane proton channel. CF(1) has five subunits: alpha(3), beta(3), gamma(1), delta(1), epsilon(1). CF(0) has three main subunits: a(1), b(2) and c(9-12). The alpha and beta chains form an alternating ring which encloses part of the gamma chain. CF(1) is attached to CF(0) by a central stalk formed by the gamma and epsilon chains, while a peripheral stalk is formed by the delta and b chains.

It is found in the cell membrane. The catalysed reaction is ATP + H2O + 4 H(+)(in) = ADP + phosphate + 5 H(+)(out). Produces ATP from ADP in the presence of a proton gradient across the membrane. The alpha chain is a regulatory subunit. The chain is ATP synthase subunit alpha from Clostridium botulinum (strain Loch Maree / Type A3).